Here is a 1049-residue protein sequence, read N- to C-terminus: Probable ATP-dependent permease (1049 aa).

A signal peptide spans 1-25 (MGSHRRYLYYSILSFLLLSCSVVLA). The Lumenal segment spans residues 26–324 (KQDKTPFFEG…KDPTVSWQGK (299 aa)). N-linked (GlcNAc...) asparagine glycosylation is found at Asn50, Asn114, Asn165, and Asn221. Residues 325-345 (LVLALTAVMVLALFTFATFYI) form a helical membrane-spanning segment. Residues 346–463 (SKSPLFRNGL…ISMDRKSFSK (118 aa)) lie on the Cytoplasmic side of the membrane. Positions 384–631 (LSFENITYSV…LRNEGYICPD (248 aa)) constitute an ABC transporter domain. An ATP-binding site is contributed by 423–430 (GGSGAGKT). A helical transmembrane segment spans residues 464–481 (IIGFVDQDDFLLPTLTVF). Residues 482 to 793 (ETVLNSALLR…SFKNMYRNPK (312 aa)) lie on the Lumenal side of the membrane. A phosphoserine mark is found at Ser659 and Ser702. Positions 793–1044 (KLLLGNYLLT…IMGYLALKWI (252 aa)) constitute an ABC transmembrane type-2 domain. Residues 794 to 814 (LLLGNYLLTILLSLFLGTLYY) form a helical membrane-spanning segment. The Cytoplasmic portion of the chain corresponds to 815 to 828 (NVSNDISGFQNRMG). The helical transmembrane segment at 829–849 (LFFFILTYFGFVTFTGLSSFA) threads the bilayer. The Lumenal segment spans residues 850 to 877 (LERIIFIKERSNNYYSPLAYYISKIMSE). A helical transmembrane segment spans residues 878–898 (VVPLRVVPPILLSLIVYPMTG). The Cytoplasmic segment spans residues 899–909 (LNMKDNAFFKC). A helical membrane pass occupies residues 910 to 930 (IGILILFNLGISLEILTIGII). Over 931 to 937 (FEDLNNS) the chain is Lumenal. The N-linked (GlcNAc...) asparagine glycan is linked to Asn935. Residues 938–958 (IILSVLVLLGSLLFSGLFINT) form a helical membrane-spanning segment. The Cytoplasmic portion of the chain corresponds to 959 to 1000 (KNITNVAFKYLKNFSVFYYAYESLLINEVKTLMLKERKYGLN). Residues 1001-1021 (IEVPGATILSTFGFVVQNLVF) form a helical membrane-spanning segment. The Lumenal portion of the chain corresponds to 1022 to 1024 (DIK). Residues 1025–1045 (ILALFNVVFLIMGYLALKWIV) form a helical membrane-spanning segment. Residues 1046-1049 (VEQK) lie on the Cytoplasmic side of the membrane.

Belongs to the ABC transporter superfamily. ABCG family. Eye pigment precursor importer (TC 3.A.1.204) subfamily.

The protein localises to the endoplasmic reticulum membrane. This chain is Probable ATP-dependent permease (ADP1), found in Saccharomyces cerevisiae (strain ATCC 204508 / S288c) (Baker's yeast).